The sequence spans 526 residues: CTP synthase (526 aa).

An amidoligase domain region spans residues 1-264 (MPQRFIVVTG…HKLIAKELDI (264 aa)). CTP is bound at residue Ser14. Ser14 is a binding site for UTP. ATP-binding positions include 15–20 (GIGKGI) and Asp72. Residues Asp72 and Glu138 each coordinate Mg(2+). CTP is bound by residues 145-147 (DIE), 185-190 (KTKPTQ), and Lys221. UTP contacts are provided by residues 185–190 (KTKPTQ) and Lys221. The region spanning 282 to 526 (KIGIVGKYLG…VKAAGGKIND (245 aa)) is the Glutamine amidotransferase type-1 domain. Gly342 serves as a coordination point for L-glutamine. Cys369 serves as the catalytic Nucleophile; for glutamine hydrolysis. L-glutamine-binding positions include 370 to 373 (LGMQ), Glu393, and Arg451. Residues His499 and Glu501 contribute to the active site.

Belongs to the CTP synthase family. As to quaternary structure, homotetramer.

The catalysed reaction is UTP + L-glutamine + ATP + H2O = CTP + L-glutamate + ADP + phosphate + 2 H(+). It carries out the reaction L-glutamine + H2O = L-glutamate + NH4(+). The enzyme catalyses UTP + NH4(+) + ATP = CTP + ADP + phosphate + 2 H(+). The protein operates within pyrimidine metabolism; CTP biosynthesis via de novo pathway; CTP from UDP: step 2/2. Its activity is regulated as follows. Allosterically activated by GTP, when glutamine is the substrate; GTP has no effect on the reaction when ammonia is the substrate. The allosteric effector GTP functions by stabilizing the protein conformation that binds the tetrahedral intermediate(s) formed during glutamine hydrolysis. Inhibited by the product CTP, via allosteric rather than competitive inhibition. Functionally, catalyzes the ATP-dependent amination of UTP to CTP with either L-glutamine or ammonia as the source of nitrogen. Regulates intracellular CTP levels through interactions with the four ribonucleotide triphosphates. This Thermosipho africanus (strain TCF52B) protein is CTP synthase.